The primary structure comprises 299 residues: ATP phosphoribosyltransferase (299 aa).

Belongs to the ATP phosphoribosyltransferase family. Long subfamily. Equilibrium between an active dimeric form, an inactive hexameric form and higher aggregates. Interconversion between the various forms is largely reversible and is influenced by the natural substrates and inhibitors of the enzyme. Mg(2+) is required as a cofactor.

The protein resides in the cytoplasm. It carries out the reaction 1-(5-phospho-beta-D-ribosyl)-ATP + diphosphate = 5-phospho-alpha-D-ribose 1-diphosphate + ATP. Its pathway is amino-acid biosynthesis; L-histidine biosynthesis; L-histidine from 5-phospho-alpha-D-ribose 1-diphosphate: step 1/9. With respect to regulation, feedback inhibited by histidine. Functionally, catalyzes the condensation of ATP and 5-phosphoribose 1-diphosphate to form N'-(5'-phosphoribosyl)-ATP (PR-ATP). Has a crucial role in the pathway because the rate of histidine biosynthesis seems to be controlled primarily by regulation of HisG enzymatic activity. In Escherichia coli O7:K1 (strain IAI39 / ExPEC), this protein is ATP phosphoribosyltransferase.